Here is a 333-residue protein sequence, read N- to C-terminus: Protein amalgam (333 aa).

The first 23 residues, 1 to 23, serve as a signal peptide directing secretion; sequence MARLRLLIGLIFCLAISLDSVLS. Residues 25-128 enclose the Ig-like V-type domain; it reads PVISQISKDV…VLVSATEKVT (104 aa). N-linked (GlcNAc...) asparagine glycans are attached at residues Asn45 and Asn86. Cystine bridges form between Cys46/Cys117, Cys161/Cys208, and Cys251/Cys307. Ig-like C2-type domains are found at residues 139–223 and 230–323; these read PVIA…RLIR and PQIA…LHLF. Residue Asn308 is glycosylated (N-linked (GlcNAc...) asparagine).

It is found in the cell membrane. This is Protein amalgam (Ama) from Drosophila melanogaster (Fruit fly).